The sequence spans 249 residues: Large ribosomal subunit protein uL1 (249 aa).

The protein belongs to the universal ribosomal protein uL1 family. Part of the 50S ribosomal subunit.

Its function is as follows. Binds directly to 23S rRNA. The L1 stalk is quite mobile in the ribosome, and is involved in E site tRNA release. Protein L1 is also a translational repressor protein, it controls the translation of the L11 operon by binding to its mRNA. This Orientia tsutsugamushi (strain Ikeda) (Rickettsia tsutsugamushi) protein is Large ribosomal subunit protein uL1.